The following is a 133-amino-acid chain: Bacteriohemerythrin (133 aa).

Residues H19, H56, E60, H75, H79, H115, and D120 each contribute to the Fe cation site.

It belongs to the hemerythrin family. Monomer.

Functionally, oxygen-binding protein. May be involved in a storage mechanism or for delivery to oxygen-requiring enzymes. The oxygen-binding site contains two iron atoms. The chain is Bacteriohemerythrin from Campylobacter jejuni subsp. jejuni serotype O:23/36 (strain 81-176).